The primary structure comprises 162 residues: Phenazine biosynthesis protein PhzB1 (162 aa).

This sequence belongs to the PhzA/PhzB family. Homodimer.

It functions in the pathway antibiotic biosynthesis; phenazine biosynthesis. In terms of biological role, involved in the biosynthesis of the antibiotic phenazine, a nitrogen-containing heterocyclic molecule. PhzB1 (operon phzA1B1C1E1F1G1) has a role in the biosynthesis of the phenazine during planktonic growth. The protein is Phenazine biosynthesis protein PhzB1 of Pseudomonas aeruginosa (strain ATCC 15692 / DSM 22644 / CIP 104116 / JCM 14847 / LMG 12228 / 1C / PRS 101 / PAO1).